We begin with the raw amino-acid sequence, 428 residues long: Adenylosuccinate synthetase (428 aa).

GTP-binding positions include 12–18 (GDEGKGK) and 40–42 (GHT). Asp-13 serves as the catalytic Proton acceptor. Mg(2+)-binding residues include Asp-13 and Gly-40. IMP contacts are provided by residues 13 to 16 (DEGK), 38 to 41 (NAGH), Thr-130, Arg-144, Gln-225, Thr-240, and Arg-304. The Proton donor role is filled by His-41. Substrate is bound at residue 300 to 306 (VTTGRSR). GTP contacts are provided by residues Arg-306, 332–334 (KID), and 414–416 (GVG).

It belongs to the adenylosuccinate synthetase family. As to quaternary structure, homodimer. Requires Mg(2+) as cofactor.

The protein resides in the cytoplasm. It carries out the reaction IMP + L-aspartate + GTP = N(6)-(1,2-dicarboxyethyl)-AMP + GDP + phosphate + 2 H(+). Its pathway is purine metabolism; AMP biosynthesis via de novo pathway; AMP from IMP: step 1/2. In terms of biological role, plays an important role in the de novo pathway of purine nucleotide biosynthesis. Catalyzes the first committed step in the biosynthesis of AMP from IMP. This is Adenylosuccinate synthetase from Clostridium botulinum (strain Alaska E43 / Type E3).